We begin with the raw amino-acid sequence, 468 residues long: Ribulose bisphosphate carboxylase large chain (468 aa).

At Lys5 the chain carries N6,N6,N6-trimethyllysine. Residues Asn114 and Thr164 each contribute to the substrate site. Catalysis depends on Lys166, which acts as the Proton acceptor. Lys168 contacts substrate. Mg(2+) contacts are provided by Lys192, Asp194, and Glu195. Position 192 is an N6-carboxylysine (Lys192). His285 acts as the Proton acceptor in catalysis. Substrate is bound by residues Arg286, His318, and Ser370.

This sequence belongs to the RuBisCO large chain family. Type I subfamily. In terms of assembly, heterohexadecamer of 8 large chains and 8 small chains; disulfide-linked. The disulfide link is formed within the large subunit homodimers. Mg(2+) serves as cofactor. Post-translationally, the disulfide bond which can form in the large chain dimeric partners within the hexadecamer appears to be associated with oxidative stress and protein turnover.

It localises to the plastid. It is found in the chloroplast. The catalysed reaction is 2 (2R)-3-phosphoglycerate + 2 H(+) = D-ribulose 1,5-bisphosphate + CO2 + H2O. It carries out the reaction D-ribulose 1,5-bisphosphate + O2 = 2-phosphoglycolate + (2R)-3-phosphoglycerate + 2 H(+). RuBisCO catalyzes two reactions: the carboxylation of D-ribulose 1,5-bisphosphate, the primary event in carbon dioxide fixation, as well as the oxidative fragmentation of the pentose substrate in the photorespiration process. Both reactions occur simultaneously and in competition at the same active site. This is Ribulose bisphosphate carboxylase large chain from Salvia divinorum (Maria pastora).